The sequence spans 337 residues: Phosphoenolpyruvate transferase (337 aa).

Asp-69 contributes to the 7,8-didemethyl-8-hydroxy-5-deazariboflavin binding site.

Belongs to the CofD family. In terms of assembly, homodimer. Requires Mg(2+) as cofactor.

It carries out the reaction enolpyruvoyl-2-diphospho-5'-guanosine + 7,8-didemethyl-8-hydroxy-5-deazariboflavin = dehydro coenzyme F420-0 + GMP + H(+). It participates in cofactor biosynthesis; coenzyme F420 biosynthesis. Catalyzes the transfer of the phosphoenolpyruvate moiety from enoylpyruvoyl-2-diphospho-5'-guanosine (EPPG) to 7,8-didemethyl-8-hydroxy-5-deazariboflavin (FO) with the formation of dehydro coenzyme F420-0 and GMP. In Mycobacterium avium (strain 104), this protein is Phosphoenolpyruvate transferase.